A 548-amino-acid polypeptide reads, in one-letter code: Chaperonin GroEL (548 aa).

Residues 30-33 (TLGP), K51, 87-91 (DGTTT), G415, 479-481 (NAA), and D495 contribute to the ATP site.

This sequence belongs to the chaperonin (HSP60) family. In terms of assembly, forms a cylinder of 14 subunits composed of two heptameric rings stacked back-to-back. Interacts with the co-chaperonin GroES.

The protein localises to the cytoplasm. It catalyses the reaction ATP + H2O + a folded polypeptide = ADP + phosphate + an unfolded polypeptide.. Its function is as follows. Together with its co-chaperonin GroES, plays an essential role in assisting protein folding. The GroEL-GroES system forms a nano-cage that allows encapsulation of the non-native substrate proteins and provides a physical environment optimized to promote and accelerate protein folding. The sequence is that of Chaperonin GroEL from Salmonella arizonae (strain ATCC BAA-731 / CDC346-86 / RSK2980).